The primary structure comprises 492 residues: 3-octaprenyl-4-hydroxybenzoate carboxy-lyase (492 aa).

Asparagine 172 contacts Mn(2+). Prenylated FMN is bound by residues 175–177 (IYR), 189–191 (RWL), and 194–195 (RG). Glutamate 238 contributes to the Mn(2+) binding site. Aspartate 287 functions as the Proton donor in the catalytic mechanism.

The protein belongs to the UbiD family. In terms of assembly, homohexamer. Requires prenylated FMN as cofactor. The cofactor is Mn(2+).

The protein resides in the cell membrane. The enzyme catalyses a 4-hydroxy-3-(all-trans-polyprenyl)benzoate + H(+) = a 2-(all-trans-polyprenyl)phenol + CO2. The protein operates within cofactor biosynthesis; ubiquinone biosynthesis. Catalyzes the decarboxylation of 3-octaprenyl-4-hydroxy benzoate to 2-octaprenylphenol, an intermediate step in ubiquinone biosynthesis. In Pasteurella multocida (strain Pm70), this protein is 3-octaprenyl-4-hydroxybenzoate carboxy-lyase.